The primary structure comprises 215 residues: Sodium channel regulatory subunit beta-2 (215 aa).

Positions 1–29 (MHRDAWLPRPAFSLTGLSLFFSLVPPGRS) are cleaved as a signal peptide. At 30-157 (MEVTVPATLN…MEEPPERDST (128 aa)) the chain is on the extracellular side. An Ig-like C2-type domain is found at 32–154 (VTVPATLNVL…QVLMEEPPER (123 aa)). Residues N42, N66, and N74 are each glycosylated (N-linked (GlcNAc...) asparagine). 2 disulfides stabilise this stretch: C50/C127 and C72/C75. Residues 158–179 (VAVIVGASVGGFLAVVILVLMV) traverse the membrane as a helical segment. At 180–215 (VKCVRRKKEQKLSTDDLKTEEEGKTDGEGNPDDGAK) the chain is on the cytoplasmic side. The tract at residues 187–215 (KEQKLSTDDLKTEEEGKTDGEGNPDDGAK) is disordered. Basic and acidic residues predominate over residues 189–215 (QKLSTDDLKTEEEGKTDGEGNPDDGAK). Position 192 is a phosphoserine (S192). T204 is modified (phosphothreonine).

The protein belongs to the sodium channel auxiliary subunit SCN2B (TC 8.A.17) family. As to quaternary structure, a voltage-gated sodium (Nav) channel consists of an ion-conducting pore-forming alpha subunit functional on its own that is regulated by one or more beta subunits. The beta subunit SCN2B is disulfide-linked to the pore-forming alpha subunit. Interacts with SCN1A; regulatory subunit of SCN1A/Nav1.1. Interacts with SCN2A; regulatory subunit of SCN2A/Nav1.2. Interacts with SCN3A; regulatory subunit of SCN3A/Nav1.3. Interacts with SCN5A; regulatory subunit of SCN5A/Nav1.5. Interacts with SCN8A; regulatory subunit of SCN8A/Nav1.6. Interacts with SCN9A; regulatory subunit of SCN9A/Nav1.7. Interacts with SCN10A; regulatory subunit of SCN10A/Nav1.8. Interacts with TNR; may play a crucial role in clustering and regulation of activity of SCN2B-containing Nav channels at nodes of Ranvier.

The protein resides in the cell membrane. Its subcellular location is the cell projection. The protein localises to the axon. Functionally, regulatory subunit of multiple voltage-gated sodium (Nav) channels directly mediating the depolarization of excitable membranes. Navs, also called VGSCs (voltage-gated sodium channels) or VDSCs (voltage-dependent sodium channels), operate by switching between closed and open conformations depending on the voltage difference across the membrane. In the open conformation they allow Na(+) ions to selectively pass through the pore, along their electrochemical gradient. The influx of Na+ ions provokes membrane depolarization, initiating the propagation of electrical signals throughout cells and tissues. The accessory beta subunits participate in localization and functional modulation of the Nav channels. Modulates the activity of SCN1A/Nav1.1, SCN2A/Nav1.2, SCN2A/Nav1.3, SCN5A/Nav1.5, SCN8A/Nav1.6, SCN9A/Nav1.7 and SCN10A/Nav1.8. In Homo sapiens (Human), this protein is Sodium channel regulatory subunit beta-2.